Here is a 249-residue protein sequence, read N- to C-terminus: Probable transcriptional regulatory protein LBL_2537 (249 aa).

Belongs to the TACO1 family.

The protein localises to the cytoplasm. The protein is Probable transcriptional regulatory protein LBL_2537 of Leptospira borgpetersenii serovar Hardjo-bovis (strain L550).